Reading from the N-terminus, the 363-residue chain is Probable iron/ascorbate oxidoreductase DDB_G0283291 (363 aa).

Residues 197–306 (IFNYPSIISS…RISFPLFFDP (110 aa)) enclose the Fe2OG dioxygenase domain. Residues H230, D232, and H286 each coordinate Fe cation. 2-oxoglutarate is bound at residue R297.

It belongs to the iron/ascorbate-dependent oxidoreductase family. Requires Fe(2+) as cofactor.

This is Probable iron/ascorbate oxidoreductase DDB_G0283291 from Dictyostelium discoideum (Social amoeba).